The following is a 423-amino-acid chain: SH2 domain-containing protein 5 (423 aa).

The region spanning 28-146 (AQYVGLLPCG…LLCRSFQLAY (119 aa)) is the PID domain. Residues 296-392 (WAFAGISRPC…LDMGRLNPTY (97 aa)) enclose the SH2 domain. The segment at 394 to 423 (EQDCGPLGRPPRTLRPLSHAKSEAELQGLG) is disordered. Residues 398-410 (GPLGRPPRTLRPL) show a composition bias toward low complexity.

In terms of assembly, interacts with BCR.

It is found in the postsynaptic density. May be involved in synaptic plasticity regulation through the control of Rac-GTP levels. The protein is SH2 domain-containing protein 5 of Pongo abelii (Sumatran orangutan).